We begin with the raw amino-acid sequence, 310 residues long: Dermonecrotic toxin LiSicTox-alphaII2 (310 aa).

The N-terminal stretch at 1–18 (MLLRIALILGCWSILSEG) is a signal peptide. The propeptide occupies 19–26 (AENDIAER). Residue His38 is part of the active site. Positions 58 and 60 each coordinate Mg(2+). His74 (nucleophile) is an active-site residue. Cystine bridges form between Cys78/Cys84 and Cys80/Cys224. An N-linked (GlcNAc...) asparagine glycan is attached at Asn99. A Mg(2+)-binding site is contributed by Asp118.

It belongs to the arthropod phospholipase D family. Class II subfamily. The cofactor is Mg(2+). Expressed by the venom gland.

The protein localises to the secreted. The catalysed reaction is an N-(acyl)-sphingosylphosphocholine = an N-(acyl)-sphingosyl-1,3-cyclic phosphate + choline. It carries out the reaction an N-(acyl)-sphingosylphosphoethanolamine = an N-(acyl)-sphingosyl-1,3-cyclic phosphate + ethanolamine. The enzyme catalyses a 1-acyl-sn-glycero-3-phosphocholine = a 1-acyl-sn-glycero-2,3-cyclic phosphate + choline. It catalyses the reaction a 1-acyl-sn-glycero-3-phosphoethanolamine = a 1-acyl-sn-glycero-2,3-cyclic phosphate + ethanolamine. In terms of biological role, dermonecrotic toxins cleave the phosphodiester linkage between the phosphate and headgroup of certain phospholipids (sphingolipid and lysolipid substrates), forming an alcohol (often choline) and a cyclic phosphate. This toxin acts on sphingomyelin (SM). It may also act on ceramide phosphoethanolamine (CPE), lysophosphatidylcholine (LPC) and lysophosphatidylethanolamine (LPE), but not on lysophosphatidylserine (LPS), and lysophosphatidylglycerol (LPG). It acts by transphosphatidylation, releasing exclusively cyclic phosphate products as second products. Induces dermonecrosis, hemolysis, increased vascular permeability, edema, inflammatory response, and platelet aggregation. The sequence is that of Dermonecrotic toxin LiSicTox-alphaII2 from Loxosceles intermedia (Brown spider).